Reading from the N-terminus, the 2793-residue chain is Iterative polyketide synthase afoE (2793 aa).

The segment at 1–401 is N-terminal acylcarrier protein transacylase domain (SAT); sequence MTRASASGSG…PEKPSFWLTP (401 aa). Cysteine 157 serves as the catalytic Nucleophile; for transacylase activity. The active-site Proton donor/acceptor; for transacylase activity is the histidine 279. In terms of domain architecture, Ketosynthase family 3 (KS3) spans 435-862; the sequence is SEPIAIVGMS…GSNASMIVTQ (428 aa). Active-site for beta-ketoacyl synthase activity residues include cysteine 611, histidine 746, and histidine 785. The tract at residues 977-1265 is malonyl-CoA:ACP transacylase (MAT); sequence FGGQISRFVG…SSTITVMAGR (289 aa). The segment at 1384 to 1515 is N-terminal hotdog fold; it reads WEFVGYQDDE…ATVEMRSSSD (132 aa). The 315-residue stretch at 1384-1698 folds into the PKS/mFAS DH domain; it reads WEFVGYQDDE…YMRVAKASMS (315 aa). The segment at 1411–1696 is product template (PT) domain; it reads YVLSHVIAQT…VQYMRVAKAS (286 aa). Histidine 1415 acts as the Proton acceptor; for dehydratase activity in catalysis. The interval 1550–1698 is C-terminal hotdog fold; it reads VEVLQGRNVY…YMRVAKASMS (149 aa). Aspartate 1607 (proton donor; for dehydratase activity) is an active-site residue. The tract at residues 1734–1776 is disordered; it reads PEVRASSEPGAKVKASKTSKKEKKEKKPVTKAKSKSSKPSGWR. Over residues 1747-1769 the composition is skewed to basic residues; it reads KASKTSKKEKKEKKPVTKAKSKS. Positions 1776 to 1850 constitute a Carrier domain; that stretch reads RDITEEVRNL…KFVQCVSNAL (75 aa). At serine 1810 the chain carries O-(pantetheine 4'-phosphoryl)serine. Residues 1853 to 1903 form a disordered region; sequence PNAGPAEAEDDEDEEKSDNSSSESASESDDAGSESSDTGILTPTGEEEQPL. Residues 1859–1868 are compositionally biased toward acidic residues; the sequence is EAEDDEDEEK. A methyltransferase domain region spans residues 2115–2294; that stretch reads NLLAERIGRT…HVDWTDGNLP (180 aa). The tract at residues 2360-2379 is disordered; that stretch reads SRAEKESGKTQAPHAAPGRR. The interval 2387 to 2630 is NADPH-binding domain; that stretch reads VTGATGSLGS…QWIPVDYCAA (244 aa).

Requires pantetheine 4'-phosphate as cofactor.

It catalyses the reaction (3E,5E,7S)-5,7-dimethyl-2-oxonona-3,5-dienyl-[ACP] + 4 malonyl-CoA + AH2 + S-adenosyl-L-methionine + 3 H(+) = 6-[(3E,5E,7S)-5,7-dimethyl-2-oxonona-3,5-dienyl]-2,4-dihydroxy-3-methylbenzaldehyde + holo-[ACP] + A + S-adenosyl-L-homocysteine + 4 CO2 + 4 CoA + H2O. The protein operates within secondary metabolite biosynthesis. Functionally, iterative polyketide synthase; part of the gene cluster that mediates the biosynthesis of asperfuranone, a probable antitumor agent. The polyketide synthase afoG is responsible for producing the 3,5-dimethyloctadienone moiety from acetyl-CoA, three malonyl-CoA, and two S-adenosyl methionines (SAM). The 3,5-dimethyloctadienone moiety is then loaded onto the SAT domain of afoE and extended with four malonyl-CoA and one SAM, which leads to the formation of 2,4-dihydroxy-6-(5,7-dimethyl-2-oxo-trans-3-trans-5-nonadienyl)-3-methylbenzaldehyde (compound 2) after reductive release and aldol condensation. AfoD is the next enzyme in the biosynthesis sequence and hydroxylates the side chain at the benzylic position of compound 2. After benzylic hydroxylation, a furan ring is formed after five-member ring hemiacetal formation and water elimination. AfoF and afoC are proposed to oxidize the R-diketone proton and to reduce the unconjugated carbonyl group, respectively, to generate asperfuranone. Since no intermediates could be isolated from afoF and afoC deletants, the sequence of these two enzymes is not fully understood. Moreover, since afoC deletant still produces a small amount of asperfuranone, other endogenous oxidoreductases might catalyze the same reaction with much less efficiency. This chain is Iterative polyketide synthase afoE, found in Emericella nidulans (strain FGSC A4 / ATCC 38163 / CBS 112.46 / NRRL 194 / M139) (Aspergillus nidulans).